A 600-amino-acid chain; its full sequence is NADH-quinone oxidoreductase subunit C/D (600 aa).

The segment at 1–190 (MVNNMTDLTA…DPFELTKAKQ (190 aa)) is NADH dehydrogenase I subunit C. The NADH dehydrogenase I subunit D stretch occupies residues 214 to 600 (DFMFLNLGPN…IDFVMSDVDR (387 aa)).

It in the N-terminal section; belongs to the complex I 30 kDa subunit family. In the C-terminal section; belongs to the complex I 49 kDa subunit family. In terms of assembly, NDH-1 is composed of 13 different subunits. Subunits NuoB, CD, E, F, and G constitute the peripheral sector of the complex.

Its subcellular location is the cell inner membrane. It carries out the reaction a quinone + NADH + 5 H(+)(in) = a quinol + NAD(+) + 4 H(+)(out). In terms of biological role, NDH-1 shuttles electrons from NADH, via FMN and iron-sulfur (Fe-S) centers, to quinones in the respiratory chain. The immediate electron acceptor for the enzyme in this species is believed to be ubiquinone. Couples the redox reaction to proton translocation (for every two electrons transferred, four hydrogen ions are translocated across the cytoplasmic membrane), and thus conserves the redox energy in a proton gradient. The protein is NADH-quinone oxidoreductase subunit C/D of Salmonella paratyphi C (strain RKS4594).